A 72-amino-acid chain; its full sequence is Inner membrane protein YmgF (72 aa).

At 1 to 9 (MNNSNNLDY) the chain is on the cytoplasmic side. The chain crosses the membrane as a helical span at residues 10 to 30 (FTLYIIFSIAFMLITLLVILI). The Periplasmic portion of the chain corresponds to 31 to 34 (AKPS). A helical membrane pass occupies residues 35–55 (TGLGEVLVTINLLNALVWLAI). The Cytoplasmic portion of the chain corresponds to 56–72 (NLVNRLRERLVNHRDQQ).

In terms of assembly, interacts with FtsL, FtsQ, FtsI, FtsN, and probably many other cell division proteins.

It localises to the cell inner membrane. Functionally, could be involved in cell division. May participate in the stabilization of the cell divisome under specific conditions. The sequence is that of Inner membrane protein YmgF (ymgF) from Escherichia coli (strain K12).